Reading from the N-terminus, the 514-residue chain is Citrate synthase 2, peroxisomal (514 aa).

Active-site residues include histidine 324, histidine 363, and aspartate 419.

It belongs to the citrate synthase family. Widely expressed. Expressed throughout the shoot. Expressed in flower, silique, stem, cauline leaf, young leaf, mature leaf and senescent leaf.

It localises to the peroxisome. It catalyses the reaction oxaloacetate + acetyl-CoA + H2O = citrate + CoA + H(+). The protein operates within carbohydrate metabolism; tricarboxylic acid cycle; isocitrate from oxaloacetate: step 1/2. In terms of biological role, peroxisomal citrate synthase required for the fatty acid respiration in seedlings, citrate being exported from peroxisomes into mitochondria during respiration of triacylglycerol (TAG). Indeed, complete respiration requires the transfer of carbon in the form of citrate from the peroxisome to the mitochondria. The sequence is that of Citrate synthase 2, peroxisomal (CSY2) from Arabidopsis thaliana (Mouse-ear cress).